Here is a 906-residue protein sequence, read N- to C-terminus: Protein translocase subunit SecA (906 aa).

Residues Gln-86, 104 to 108 (GEGKT), and Asp-499 each bind ATP. The disordered stretch occupies residues 863 to 885 (PVVSRIDPKDRNPDDPTSWGRVS). 4 residues coordinate Zn(2+): Cys-890, Cys-892, Cys-901, and His-902.

Belongs to the SecA family. In terms of assembly, monomer and homodimer. Part of the essential Sec protein translocation apparatus which comprises SecA, SecYEG and auxiliary proteins SecDF-YajC and YidC. It depends on Zn(2+) as a cofactor.

It localises to the cell inner membrane. The protein localises to the cytoplasm. The catalysed reaction is ATP + H2O + cellular proteinSide 1 = ADP + phosphate + cellular proteinSide 2.. Functionally, part of the Sec protein translocase complex. Interacts with the SecYEG preprotein conducting channel. Has a central role in coupling the hydrolysis of ATP to the transfer of proteins into and across the cell membrane, serving both as a receptor for the preprotein-SecB complex and as an ATP-driven molecular motor driving the stepwise translocation of polypeptide chains across the membrane. The chain is Protein translocase subunit SecA from Rickettsia akari (strain Hartford).